The sequence spans 425 residues: Serine--tRNA ligase (425 aa).

Position 232 to 234 (232 to 234 (TSE)) interacts with L-serine. ATP-binding positions include 263 to 265 (RRE) and Val-279. Glu-286 lines the L-serine pocket. 350-353 (EVVS) lines the ATP pocket. Residue Thr-387 coordinates L-serine.

This sequence belongs to the class-II aminoacyl-tRNA synthetase family. Type-1 seryl-tRNA synthetase subfamily. In terms of assembly, homodimer. The tRNA molecule binds across the dimer.

It is found in the cytoplasm. It carries out the reaction tRNA(Ser) + L-serine + ATP = L-seryl-tRNA(Ser) + AMP + diphosphate + H(+). The enzyme catalyses tRNA(Sec) + L-serine + ATP = L-seryl-tRNA(Sec) + AMP + diphosphate + H(+). It participates in aminoacyl-tRNA biosynthesis; selenocysteinyl-tRNA(Sec) biosynthesis; L-seryl-tRNA(Sec) from L-serine and tRNA(Sec): step 1/1. Functionally, catalyzes the attachment of serine to tRNA(Ser). Is also able to aminoacylate tRNA(Sec) with serine, to form the misacylated tRNA L-seryl-tRNA(Sec), which will be further converted into selenocysteinyl-tRNA(Sec). This is Serine--tRNA ligase from Methanoregula boonei (strain DSM 21154 / JCM 14090 / 6A8).